The primary structure comprises 250 residues: Ribosomal RNA small subunit methyltransferase J (250 aa).

Residues 101–102, 117–118, 153–154, and D171 each bind S-adenosyl-L-methionine; these read RD, ER, and SS.

It belongs to the methyltransferase superfamily. RsmJ family.

The protein localises to the cytoplasm. The enzyme catalyses guanosine(1516) in 16S rRNA + S-adenosyl-L-methionine = N(2)-methylguanosine(1516) in 16S rRNA + S-adenosyl-L-homocysteine + H(+). In terms of biological role, specifically methylates the guanosine in position 1516 of 16S rRNA. This is Ribosomal RNA small subunit methyltransferase J from Cronobacter sakazakii (strain ATCC BAA-894) (Enterobacter sakazakii).